The sequence spans 213 residues: PRA1 family protein B2 (213 aa).

Residues 1-21 (MSSSPAILPVTNQQAATQSQP) are disordered. Transmembrane regions (helical) follow at residues 75 to 94 (LAYF…AFSL), 98 to 117 (PFSL…LYLF), 137 to 157 (LLGL…GSLL), 161 to 181 (LTIG…DDLF), and 190 to 210 (AGLL…SVVA).

Belongs to the PRA1 family. In terms of assembly, interacts with PRA1B1, PRA1B3, PRA1B4, PRA1B5, PRA1B6 and PRA1E.

It is found in the endosome membrane. In terms of biological role, may be involved in both secretory and endocytic intracellular trafficking in the endosomal/prevacuolar compartments. The polypeptide is PRA1 family protein B2 (PRA1B2) (Arabidopsis thaliana (Mouse-ear cress)).